A 75-amino-acid polypeptide reads, in one-letter code: MGSVLAEVAGSLASIGYGLAAIGSAIGVGIVVGKTVESVARQPELAKRLTVLMYVGVAFTEALALIGIGTYFLFR.

A run of 2 helical transmembrane segments spans residues 12–32 (LASIGYGLAAIGSAIGVGIVV) and 49–69 (LTVLMYVGVAFTEALALIGIG).

This sequence belongs to the ATPase C chain family. In terms of assembly, F-type ATPases have 2 components, F(1) - the catalytic core - and F(0) - the membrane proton channel. F(1) has five subunits: alpha(3), beta(3), gamma(1), delta(1), epsilon(1). F(0) has three main subunits: a(1), b(2) and c(10-14). The alpha and beta chains form an alternating ring which encloses part of the gamma chain. F(1) is attached to F(0) by a central stalk formed by the gamma and epsilon chains, while a peripheral stalk is formed by the delta and b chains.

Its subcellular location is the cell membrane. In terms of biological role, f(1)F(0) ATP synthase produces ATP from ADP in the presence of a proton or sodium gradient. F-type ATPases consist of two structural domains, F(1) containing the extramembraneous catalytic core and F(0) containing the membrane proton channel, linked together by a central stalk and a peripheral stalk. During catalysis, ATP synthesis in the catalytic domain of F(1) is coupled via a rotary mechanism of the central stalk subunits to proton translocation. Key component of the F(0) channel; it plays a direct role in translocation across the membrane. A homomeric c-ring of between 10-14 subunits forms the central stalk rotor element with the F(1) delta and epsilon subunits. The polypeptide is ATP synthase subunit c (Tropheryma whipplei (strain TW08/27) (Whipple's bacillus)).